A 601-amino-acid chain; its full sequence is 4-hydroxy-3-methylbut-2-en-1-yl diphosphate synthase (flavodoxin) (601 aa).

[4Fe-4S] cluster-binding residues include Cys507, Cys510, Cys542, and Glu549.

This sequence belongs to the IspG family. The cofactor is [4Fe-4S] cluster.

The enzyme catalyses (2E)-4-hydroxy-3-methylbut-2-enyl diphosphate + oxidized [flavodoxin] + H2O + 2 H(+) = 2-C-methyl-D-erythritol 2,4-cyclic diphosphate + reduced [flavodoxin]. It functions in the pathway isoprenoid biosynthesis; isopentenyl diphosphate biosynthesis via DXP pathway; isopentenyl diphosphate from 1-deoxy-D-xylulose 5-phosphate: step 5/6. Converts 2C-methyl-D-erythritol 2,4-cyclodiphosphate (ME-2,4cPP) into 1-hydroxy-2-methyl-2-(E)-butenyl 4-diphosphate. The chain is 4-hydroxy-3-methylbut-2-en-1-yl diphosphate synthase (flavodoxin) from Chlamydia muridarum (strain MoPn / Nigg).